The primary structure comprises 371 residues: MPHHYILTLFGLLPVATNISTWWNFGSMLLTCLALQVLTGFFLAVHYTANINLAFSSIIHITRDVPYGWMMQNLHAIGASMFFICIYIHIARGLYYGSYLNKETWMSGITLLITLMATAFFGYVLPWGQMSFWAATVITNLLTAVPYLGTSLTTWLWGGFAINDPTLTRFFALHFILPFAIISLSSLHVILLHEEGSSNPLGTNPDIDKIPFHPYHSYKDFLLLTLMVLSLFIIVSFFPDIFNDPDNFSKANPLVTPQHIKPEWYFLFAYGILRSIPNQLGGALALVMSIMILFTIPFTHTANLRPMTFRPLYQLMFWTLVSTFITITWAATKPVEPPFITISQVTSTLYFTFFISIPFLGWMENKMMHLN.

4 helical membrane passes run 25–45, 69–90, 105–125, and 170–190; these read FGSM…FLAV, WMMQ…YIHI, WMSG…GYVL, and FFAL…LHVI. Residues H75 and H89 each contribute to the heme b site. 2 residues coordinate heme b: H174 and H188. Residue H193 participates in a ubiquinone binding. Helical transmembrane passes span 218–238, 280–300, 312–332, and 339–358; these read YKDF…VSFF, LGGA…PFTH, LYQL…WAAT, and FITI…ISIP.

The protein belongs to the cytochrome b family. As to quaternary structure, the cytochrome bc1 complex contains 3 respiratory subunits (MT-CYB, CYC1 and UQCRFS1), 2 core proteins (UQCRC1 and UQCRC2) and probably 6 low-molecular weight proteins. Requires heme b as cofactor.

It is found in the mitochondrion inner membrane. Functionally, component of the ubiquinol-cytochrome c reductase complex (complex III or cytochrome b-c1 complex) that is part of the mitochondrial respiratory chain. The b-c1 complex mediates electron transfer from ubiquinol to cytochrome c. Contributes to the generation of a proton gradient across the mitochondrial membrane that is then used for ATP synthesis. The chain is Cytochrome b (MT-CYB) from Malayopython reticulatus (Reticulate python).